The chain runs to 244 residues: Ureidoacrylate amidohydrolase RutB (244 aa).

Aspartate 38 serves as the catalytic Proton acceptor. Residue lysine 147 is part of the active site. Catalysis depends on cysteine 180, which acts as the Nucleophile.

It belongs to the isochorismatase family. RutB subfamily.

It catalyses the reaction (Z)-3-ureidoacrylate + H2O + H(+) = (Z)-3-aminoacrylate + NH4(+) + CO2. It carries out the reaction (Z)-3-ureidoacrylate + H2O = (Z)-3-aminoacrylate + carbamate + H(+). The enzyme catalyses (Z)-2-methylureidoacrylate + H2O + H(+) = (Z)-2-methylaminoacrylate + NH4(+) + CO2. In terms of biological role, hydrolyzes ureidoacrylate to form aminoacrylate and carbamate. The carbamate hydrolyzes spontaneously, thereby releasing one of the nitrogen atoms of the pyrimidine ring as ammonia and one of its carbon atoms as CO2. The chain is Ureidoacrylate amidohydrolase RutB from Escherichia coli O1:K1 / APEC.